The chain runs to 34 residues: Photosystem II reaction center protein M (34 aa).

The chain crosses the membrane as a helical span at residues 7–27 (GFLATLLFVAVPMLFLIGLYI).

It belongs to the PsbM family. As to quaternary structure, PSII is composed of 1 copy each of membrane proteins PsbA, PsbB, PsbC, PsbD, PsbE, PsbF, PsbH, PsbI, PsbJ, PsbK, PsbL, PsbM, PsbT, PsbX, PsbY, Psb30/Ycf12, peripheral proteins PsbO, CyanoQ (PsbQ), PsbU, PsbV and a large number of cofactors. It forms dimeric complexes.

The protein resides in the cellular thylakoid membrane. Functionally, one of the components of the core complex of photosystem II (PSII). PSII is a light-driven water:plastoquinone oxidoreductase that uses light energy to abstract electrons from H(2)O, generating O(2) and a proton gradient subsequently used for ATP formation. It consists of a core antenna complex that captures photons, and an electron transfer chain that converts photonic excitation into a charge separation. This subunit is found at the monomer-monomer interface. This Prochlorococcus marinus (strain MIT 9303) protein is Photosystem II reaction center protein M.